The sequence spans 252 residues: tRNA (guanine-N(1)-)-methyltransferase (252 aa).

S-adenosyl-L-methionine contacts are provided by residues Gly-113 and 133 to 138; that span reads IGDYVL. The span at 229–238 shows a compositional bias: low complexity; sequence VARPAANAPA. The interval 229–252 is disordered; it reads VARPAANAPAKGESQKTPKNKTDG. The span at 241-252 shows a compositional bias: basic and acidic residues; that stretch reads ESQKTPKNKTDG.

The protein belongs to the RNA methyltransferase TrmD family. In terms of assembly, homodimer.

The protein localises to the cytoplasm. It catalyses the reaction guanosine(37) in tRNA + S-adenosyl-L-methionine = N(1)-methylguanosine(37) in tRNA + S-adenosyl-L-homocysteine + H(+). Functionally, specifically methylates guanosine-37 in various tRNAs. The protein is tRNA (guanine-N(1)-)-methyltransferase of Rhodopseudomonas palustris (strain HaA2).